The primary structure comprises 259 residues: L-erythrulose-1-phosphate isomerase (259 aa).

Histidine 102 acts as the Electrophile in catalysis. Glutamate 174 serves as the catalytic Proton acceptor.

It belongs to the triosephosphate isomerase family.

The catalysed reaction is L-erythrulose 1-phosphate = D-erythrulose 4-phosphate. Its pathway is carbohydrate metabolism. Its function is as follows. Involved in catabolism of D-apiose. Catalyzes the isomerization of L-erythrulose 1-phosphate to D-erythrulose 4-phosphate. This is L-erythrulose-1-phosphate isomerase from Pectobacterium atrosepticum (strain SCRI 1043 / ATCC BAA-672) (Erwinia carotovora subsp. atroseptica).